We begin with the raw amino-acid sequence, 502 residues long: 4,4'-diapophytoene desaturase (4,4'-diaponeurosporene-forming) (502 aa).

5-17 (VIGAGVTGLAAAA) provides a ligand contact to FAD.

The protein belongs to the carotenoid/retinoid oxidoreductase family. CrtN subfamily.

The enzyme catalyses 15-cis-4,4'-diapophytoene + 3 FAD + 3 H(+) = all-trans-4,4'-diaponeurosporene + 3 FADH2. It functions in the pathway carotenoid biosynthesis; staphyloxanthin biosynthesis; staphyloxanthin from farnesyl diphosphate: step 2/5. Its function is as follows. Involved in the biosynthesis of the yellow-orange carotenoid staphyloxanthin, which plays a role in the virulence via its protective function against oxidative stress. Catalyzes three successive dehydrogenation reactions that lead to the introduction of three double bonds into 4,4'-diapophytoene (dehydrosqualene), with 4,4'-diapophytofluene and 4,4'-diapo-zeta-carotene as intermediates, and 4,4'-diaponeurosporene (the major deep-yellow pigment in staphylococci strains) as the end product. The sequence is that of 4,4'-diapophytoene desaturase (4,4'-diaponeurosporene-forming) from Staphylococcus aureus (strain MW2).